Here is a 1934-residue protein sequence, read N- to C-terminus: Tudor domain-containing protein 15 (1934 aa).

Tudor domains lie at 59–117 (NVEI…LFEL), 289–347 (CDNF…FILV), 531–589 (KPEP…FCEL), 799–856 (PYEI…FLLL), 1011–1070 (DSNK…FPEL), and 1342–1401 (KPLV…FLTV). A disordered region spans residues 1490 to 1510 (VRPGDNEMKKGKSNESEGSMN). A compositionally biased stretch (basic and acidic residues) spans 1491-1504 (RPGDNEMKKGKSNE). Tudor domains lie at 1574–1633 (SIEK…IRNI) and 1780–1838 (FIIP…PEEL).

The sequence is that of Tudor domain-containing protein 15 (TDRD15) from Homo sapiens (Human).